A 487-amino-acid polypeptide reads, in one-letter code: MEDAESTTKDPVDRVEKVTWRDLQDGSFTAELKKLICFAAPMAAVVITQSMLQIITMVIVGHLGRLSLASASFAISFCNVTGFSFIMGLSCALDTLSGQAYGAKLYRKLGVQAYTAMFCLTLVCLPLSLLWFNMGKLLVILGQDPSIAHEAGRFAAWLIPGLFAYAVLQPLTRYFKNQSLITPLLITSCVVFCLHVPLCWLLVYKSGLDHIGGALALSLSYWLYAIFLGSFMYFSSACSETRAPLTMEIFEGVREFIKYALPSAAMLCLEWWSYELIILLSGLLPNPQLETSVLSVCLQTLSMTYSIPLAIAAAASTRISNELGAGNSRAAHIVVYAAMSLAVVDALMVGTSLLAGKNLLGQVFSSDKNTIDYVAKMAPLVSISLILDSLQGVLSGVASGCGWQHIGAYINFGAFYLWGIPIAASLAFWVHLKGVGLWIGIIAGAVLQTLLLALVTGCINWENQAREARKRMAVAHESELTESELPF.

12 consecutive transmembrane segments (helical) span residues 35-55, 73-93, 122-142, 151-171, 184-204, 211-231, 264-284, 293-313, 330-350, 377-397, 412-432, and 435-455; these read LICF…LQII, FAIS…SCAL, LVCL…VILG, AGRF…LQPL, LLIT…LLVY, IGGA…LGSF, AAML…SGLL, VLSV…AIAA, AAHI…LMVG, MAPL…LSGV, FGAF…WVHL, and VGLW…LALV.

Belongs to the multi antimicrobial extrusion (MATE) (TC 2.A.66.1) family.

It localises to the membrane. The chain is Protein DETOXIFICATION 11 from Arabidopsis thaliana (Mouse-ear cress).